Consider the following 247-residue polypeptide: Small ribosomal subunit protein uS3 (247 aa).

Residues 39 to 107 form the KH type-2 domain; sequence VRDYLRKKLD…PAQVNIEEIT (69 aa). The interval 213 to 247 is disordered; it reads SVYNPPKEDKTRAPKRRGRSNSNRRNSDRANTDRG. The span at 237–247 shows a compositional bias: basic and acidic residues; sequence RNSDRANTDRG.

Belongs to the universal ribosomal protein uS3 family. As to quaternary structure, part of the 30S ribosomal subunit. Forms a tight complex with proteins S10 and S14.

In terms of biological role, binds the lower part of the 30S subunit head. Binds mRNA in the 70S ribosome, positioning it for translation. The chain is Small ribosomal subunit protein uS3 from Psychrobacter sp. (strain PRwf-1).